Reading from the N-terminus, the 338-residue chain is Malate dehydrogenase, mitochondrial (338 aa).

Residues 1 to 24 constitute a mitochondrion transit peptide; sequence MLSALARPASAVLRRSFSTSAQNN. NAD(+) contacts are provided by residues 31–37 and aspartate 57; that span reads GASGGIG. Serine 33 is a glycosylation site (O-linked (GlcNAc) serine). An N6-acetyllysine; alternate mark is found at lysine 78 and lysine 91. N6-succinyllysine; alternate occurs at positions 78 and 91. Residues arginine 104 and arginine 110 each contribute to the substrate site. NAD(+) contacts are provided by residues asparagine 117 and 140 to 142; that span reads IAN. Asparagine 142 contributes to the substrate binding site. N6-acetyllysine is present on lysine 165. Position 176 (arginine 176) interacts with substrate. Lysine 185 is modified (N6-acetyllysine; alternate). Lysine 185 is modified (N6-succinyllysine; alternate). Histidine 200 functions as the Proton acceptor in the catalytic mechanism. Lysine 203 carries the N6-succinyllysine modification. 2 positions are modified to N6-acetyllysine; alternate: lysine 215 and lysine 239. 2 positions are modified to N6-succinyllysine; alternate: lysine 215 and lysine 239. The residue at position 239 (lysine 239) is an N6-malonyllysine; alternate. Serine 246 is modified (phosphoserine). Position 251 (methionine 251) interacts with NAD(+). N6-succinyllysine is present on lysine 269. Residues lysine 296, lysine 301, lysine 307, lysine 314, and lysine 324 each carry the N6-acetyllysine; alternate modification. N6-succinyllysine; alternate is present on residues lysine 296, lysine 301, lysine 307, lysine 314, and lysine 324. Lysine 307 bears the N6-malonyllysine; alternate mark. Phosphoserine is present on serine 326. Lysine 328, lysine 329, and lysine 335 each carry N6-acetyllysine; alternate. Lysine 328 is subject to N6-succinyllysine; alternate. Lysine 329 is modified (N6-malonyllysine; alternate). At lysine 335 the chain carries N6-succinyllysine; alternate.

This sequence belongs to the LDH/MDH superfamily. MDH type 1 family. In terms of assembly, homodimer. Acetylation is enhanced after treatment either with trichostin A (TCA) or with nicotinamide (NAM) with the appearance of tri- and tetraacetylations. Glucose also increases acetylation.

It is found in the mitochondrion matrix. The enzyme catalyses (S)-malate + NAD(+) = oxaloacetate + NADH + H(+). Its activity is regulated as follows. Enzyme activity is enhanced by acetylation. The protein is Malate dehydrogenase, mitochondrial (MDH2) of Pongo abelii (Sumatran orangutan).